A 240-amino-acid polypeptide reads, in one-letter code: uncharacterized protein (240 aa).

A helical membrane pass occupies residues 73-93 (LLGCLYFFIYFVAPTLGPVLF).

The protein belongs to the universal ribosomal protein uS3 family.

It localises to the mitochondrion membrane. This is an uncharacterized protein from Arabidopsis thaliana (Mouse-ear cress).